Here is a 340-residue protein sequence, read N- to C-terminus: Phenylalanine--tRNA ligase alpha subunit (340 aa).

Glu-258 contributes to the Mg(2+) binding site.

This sequence belongs to the class-II aminoacyl-tRNA synthetase family. Phe-tRNA synthetase alpha subunit type 1 subfamily. Tetramer of two alpha and two beta subunits. It depends on Mg(2+) as a cofactor.

It is found in the cytoplasm. The catalysed reaction is tRNA(Phe) + L-phenylalanine + ATP = L-phenylalanyl-tRNA(Phe) + AMP + diphosphate + H(+). In Corynebacterium efficiens (strain DSM 44549 / YS-314 / AJ 12310 / JCM 11189 / NBRC 100395), this protein is Phenylalanine--tRNA ligase alpha subunit.